Here is a 168-residue protein sequence, read N- to C-terminus: MVIKIPNTFIKATSLLSLILYFLIIATSKSNSVLADEVVDQEDDPEYYILDETPSILSNVTISSKTRLLVSHYKKIKKGMRCHVESYNICNGVKANKGTSLLHCCKKHCRNVLGDRNNCGRCGHKCGFGQRCCGGVCTYVNFNPNHCGKCTRKCASGVKCEYGYCGYA.

The signal sequence occupies residues 1–30 (MVIKIPNTFIKATSLLSLILYFLIIATSKS). N-linked (GlcNAc...) asparagine glycosylation occurs at Asn59.

Belongs to the STIG1 family. Interacts with PRK5 and to a lower extent with PRK4. Highly expressed in flowers, and at very low levels in leaves.

It is found in the secreted. It localises to the extracellular space. The protein resides in the apoplast. Functionally, involved in the regulation of cell death induced by extracellular reactive oxygen species. Only the processed peptide, and not the full length GRI can bind in vivo to the extracellular domain of the receptor PRK5. The GRIp-induced cell death is superoxide and salicylic acid dependent. In Arabidopsis thaliana (Mouse-ear cress), this protein is Protein GRIM REAPER.